We begin with the raw amino-acid sequence, 46 residues long: Esculentin-1SEa (46 aa).

Cys-40 and Cys-46 are disulfide-bonded.

In terms of tissue distribution, expressed by the skin glands.

The protein localises to the secreted. Its function is as follows. Mast cell degranulating peptide. Causes histamine release from rat peritoneal mast cells in vitro. Has antibacterial activity against the Gram-negative bacterium E.coli K12 and Gram-positive bacterium M.luteus NCT C2665. The chain is Esculentin-1SEa from Lithobates sevosus (Dusky gopher frog).